A 506-amino-acid polypeptide reads, in one-letter code: UPF0522 protein A (506 aa).

Residues 1 to 18 (MIKSLLLLISIIIGIVIS) form the signal peptide. Residues Asn-145, Asn-155, Asn-330, Asn-366, Asn-418, and Asn-427 are each glycosylated (N-linked (GlcNAc...) asparagine).

The protein belongs to the UPF0522 family.

Its subcellular location is the secreted. The sequence is that of UPF0522 protein A from Dictyostelium discoideum (Social amoeba).